The following is a 440-amino-acid chain: Phosphatidylcholine-sterol acyltransferase (440 aa).

Positions 1 to 24 (MGPPGSPWQWVLLLLGLLLPPAAP) are cleaved as a signal peptide. A glycan (N-linked (GlcNAc...) asparagine) is linked at asparagine 44. Cysteine 74 and cysteine 98 are joined by a disulfide. Asparagine 108 is a glycosylation site (N-linked (GlcNAc...) asparagine). The Nucleophile role is filled by serine 205. A glycan (N-linked (GlcNAc...) asparagine) is linked at asparagine 296. A disulfide bridge links cysteine 337 with cysteine 380. Residues aspartate 369 and histidine 401 each act as charge relay system in the active site. N-linked (GlcNAc...) asparagine glycosylation is present at asparagine 408.

This sequence belongs to the AB hydrolase superfamily. Lipase family. As to expression, detected in blood plasma (at protein level). Highly expressed in liver.

The protein localises to the secreted. It catalyses the reaction a sterol + a 1,2-diacyl-sn-glycero-3-phosphocholine = a sterol ester + a 1-acyl-sn-glycero-3-phosphocholine. It carries out the reaction a 1-O-alkyl-2-acetyl-sn-glycero-3-phosphocholine + H2O = a 1-O-alkyl-sn-glycero-3-phosphocholine + acetate + H(+). The catalysed reaction is a 1-hexadecanoyl-2-acyl-sn-glycero-3-phosphocholine + (24S)-hydroxycholesterol = (24S)-24-hydroxycholesterol ester + 1-hexadecanoyl-sn-glycero-3-phosphocholine. The enzyme catalyses (24S)-hydroxycholesterol + 1-hexadecanoyl-2-(9Z,12Z-octadecadienoyl)-sn-glycero-3-phosphocholine = (24S)-hydroxycholesterol 3-linoleoate + 1-hexadecanoyl-sn-glycero-3-phosphocholine. It catalyses the reaction 1-hexadecanoyl-2-(5Z,8Z,11Z,14Z-eicosatetraenoyl)-sn-glycero-3-phosphocholine + cholesterol = cholesteryl (5Z,8Z,11Z,14Z)-eicosatetraenoate + 1-hexadecanoyl-sn-glycero-3-phosphocholine. It carries out the reaction 1-hexadecanoyl-2-(9Z-octadecenoyl)-sn-glycero-3-phosphocholine + cholesterol = cholesteryl (9Z-octadecenoate) + 1-hexadecanoyl-sn-glycero-3-phosphocholine. The catalysed reaction is 1-hexadecanoyl-2-(8Z,11Z,14Z-eicosatrienoyl)-sn-glycero-3-phosphocholine + cholesterol = cholesteryl (8Z,11Z,14Z)-eicosatrienoate + 1-hexadecanoyl-sn-glycero-3-phosphocholine. The enzyme catalyses 1-hexadecanoyl-2-(5Z,8Z,11Z-eicosatrienoyl)-sn-glycero-3-phosphocholine + cholesterol = cholesteryl (5Z,8Z,11Z)-eicosatrienoate + 1-hexadecanoyl-sn-glycero-3-phosphocholine. It catalyses the reaction 1-hexadecanoyl-2-(5Z,8Z,11Z,14Z,17Z-eicosapentaenoyl)-sn-glycero-3-phosphocholine + cholesterol = (5Z,8Z,11Z,14Z,17Z-eicosapentaenoyl)-cholesterol + 1-hexadecanoyl-sn-glycero-3-phosphocholine. It carries out the reaction 1-hexadecanoyl-2-(9Z,12Z-octadecadienoyl)-sn-glycero-3-phosphocholine + cholesterol = cholesteryl (9Z,12Z)-octadecadienoate + 1-hexadecanoyl-sn-glycero-3-phosphocholine. The catalysed reaction is 1-hexadecanoyl-2-(6Z,9Z,12Z-octadecatrienoyl)-sn-glycero-3-phosphocholine + cholesterol = (6Z,9Z,12Z-octadecatrienoyl)-cholesterol + 1-hexadecanoyl-sn-glycero-3-phosphocholine. The enzyme catalyses 1-hexadecanoyl-2-(11Z,14Z,17Z-eicosatrienoyl)-sn-glycero-3-phosphocholine + cholesterol = (11Z,14Z,17Z-eicosatrienoyl)-cholesterol + 1-hexadecanoyl-sn-glycero-3-phosphocholine. It catalyses the reaction 1-hexadecanoyl-2-(9Z,12Z,15Z-octadecatrienoyl)-sn-glycero-3-phosphocholine + cholesterol = (9Z,12Z,15Z-octadecatrienoyl)-cholesterol + 1-hexadecanoyl-sn-glycero-3-phosphocholine. It carries out the reaction 1-hexadecanoyl-2-(9Z,12Z-octadecadienoyl)-sn-glycero-3-phosphocholine + H2O = (9Z,12Z)-octadecadienoate + 1-hexadecanoyl-sn-glycero-3-phosphocholine + H(+). The catalysed reaction is 1-hexadecanoyl-2-(5Z,8Z,11Z,14Z-eicosatetraenoyl)-sn-glycero-3-phosphocholine + H2O = 1-hexadecanoyl-sn-glycero-3-phosphocholine + (5Z,8Z,11Z,14Z)-eicosatetraenoate + H(+). The enzyme catalyses a 1-O-alkyl-2-acetyl-sn-glycero-3-phosphocholine + 1-hexadecanoyl-sn-glycero-3-phosphocholine = 1-hexadecanoyl-2-acetyl-sn-glycero-3-phosphocholine + a 1-O-alkyl-sn-glycero-3-phosphocholine. Its function is as follows. Central enzyme in the extracellular metabolism of plasma lipoproteins. Synthesized mainly in the liver and secreted into plasma where it converts cholesterol and phosphatidylcholines (lecithins) to cholesteryl esters and lysophosphatidylcholines on the surface of high and low density lipoproteins (HDLs and LDLs). The cholesterol ester is then transported back to the liver. Also produced in the brain by primary astrocytes, and esterifies free cholesterol on nascent APOE-containing lipoproteins secreted from glia and influences cerebral spinal fluid (CSF) APOE- and APOA1 levels. Together with APOE and the cholesterol transporter ABCA1, plays a key role in the maturation of glial-derived, nascent lipoproteins. Required for remodeling high-density lipoprotein particles into their spherical forms. Has a preference for plasma 16:0-18:2 or 18:O-18:2 phosphatidylcholines. Catalyzes the hydrolysis of 1-O-alkyl-2-acetyl-sn-glycero-3-phosphocholine (platelet-activating factor or PAF) to 1-O-alkyl-sn-glycero-3-phosphocholine (lyso-PAF). Also catalyzes the transfer of the acetate group from PAF to 1-hexadecanoyl-sn-glycero-3-phosphocholine forming lyso-PAF. Catalyzes the esterification of (24S)-hydroxycholesterol (24(S)OH-C), also known as cerebrosterol to produce 24(S)OH-C monoesters. This Oryctolagus cuniculus (Rabbit) protein is Phosphatidylcholine-sterol acyltransferase (LCAT).